We begin with the raw amino-acid sequence, 268 residues long: Uronate dehydrogenase (268 aa).

NAD(+)-binding positions include 17–18, 37–39, 55–56, and 75–79; these read GL, DIS, DL, and FGGVS. Substrate contacts are provided by residues S79 and 115-117; that span reads SNH. The active-site Proton acceptor is Y140. Residue K144 participates in NAD(+) binding. S169 contributes to the substrate binding site. Residue S170 coordinates NAD(+). Residue R178 coordinates substrate.

Belongs to the NAD(P)-dependent epimerase/dehydratase family. Homohexamer.

It carries out the reaction beta-D-galacturonate + NAD(+) = D-galactaro-1,5-lactone + NADH + H(+). It catalyses the reaction beta-D-glucuronate + NAD(+) = D-glucaro-1,5-lactone + NADH + H(+). It functions in the pathway carbohydrate acid metabolism; D-galacturonate degradation via prokaryotic oxidative pathway. Catalyzes the oxidation of beta-D-galacturonate and beta-D-glucuronate to galactarate and D-glucarate, respectively. The protein is Uronate dehydrogenase (udh) of Pseudomonas putida (strain ATCC 47054 / DSM 6125 / CFBP 8728 / NCIMB 11950 / KT2440).